The chain runs to 170 residues: CDP-archaeol synthase (170 aa).

Transmembrane regions (helical) follow at residues 6 to 26 (LLWAFWYILPAYFANASPVLV), 53 to 73 (GLIGGVAIGTAVGALQYFITP), 83 to 103 (LLLAFLLSFGALFGDLVGSFF), 114 to 134 (PAIGLDQLGFLISALAFAYPV), and 140 to 160 (GQIIFLLVVSPFVHWGANYFA).

The protein belongs to the CDP-archaeol synthase family. Mg(2+) is required as a cofactor.

Its subcellular location is the cell membrane. It carries out the reaction 2,3-bis-O-(geranylgeranyl)-sn-glycerol 1-phosphate + CTP + H(+) = CDP-2,3-bis-O-(geranylgeranyl)-sn-glycerol + diphosphate. It participates in membrane lipid metabolism; glycerophospholipid metabolism. Functionally, catalyzes the formation of CDP-2,3-bis-(O-geranylgeranyl)-sn-glycerol (CDP-archaeol) from 2,3-bis-(O-geranylgeranyl)-sn-glycerol 1-phosphate (DGGGP) and CTP. This reaction is the third ether-bond-formation step in the biosynthesis of archaeal membrane lipids. The protein is CDP-archaeol synthase of Thermococcus onnurineus (strain NA1).